The primary structure comprises 237 residues: Increased recombination centers protein 6 (237 aa).

The protein belongs to the IRC6 family.

Involved in gross chromosomal rearrangements (GCRs) and telomere healing. This Saccharomyces cerevisiae (strain YJM789) (Baker's yeast) protein is Increased recombination centers protein 6 (IRC6).